A 75-amino-acid chain; its full sequence is Small ribosomal subunit protein bS21 (75 aa).

The protein belongs to the bacterial ribosomal protein bS21 family.

In Brucella abortus (strain S19), this protein is Small ribosomal subunit protein bS21.